The primary structure comprises 488 residues: Proline--tRNA ligase (488 aa).

This sequence belongs to the class-II aminoacyl-tRNA synthetase family. ProS type 3 subfamily. As to quaternary structure, homodimer.

The protein resides in the cytoplasm. It carries out the reaction tRNA(Pro) + L-proline + ATP = L-prolyl-tRNA(Pro) + AMP + diphosphate. Catalyzes the attachment of proline to tRNA(Pro) in a two-step reaction: proline is first activated by ATP to form Pro-AMP and then transferred to the acceptor end of tRNA(Pro). The protein is Proline--tRNA ligase of Pyrobaculum islandicum (strain DSM 4184 / JCM 9189 / GEO3).